The primary structure comprises 88 residues: MRLILSLPVLVVVLSMVLEGPAPAQAAGEISSTFERIPDKLKEFGNTLEDKARAAIESIKKSDIPAKTRNWFSEAFNKVKEHLKTAFS.

Residues 1–26 (MRLILSLPVLVVVLSMVLEGPAPAQA) form the signal peptide.

The protein belongs to the apolipoprotein C1 family.

It localises to the secreted. Functionally, inhibitor of lipoprotein binding to the low density lipoprotein (LDL) receptor, LDL receptor-related protein, and very low density lipoprotein (VLDL) receptor. Associates with high density lipoproteins (HDL) and the triacylglycerol-rich lipoproteins in the plasma and makes up about 10% of the protein of the VLDL and 2% of that of HDL. Appears to interfere directly with fatty acid uptake and is also the major plasma inhibitor of cholesteryl ester transfer protein (CETP). Binds free fatty acids and reduces their intracellular esterification. Modulates the interaction of APOE with beta-migrating VLDL and inhibits binding of beta-VLDL to the LDL receptor-related protein. The chain is Apolipoprotein C-I (APOC1) from Lycaon pictus (African wild dog).